Reading from the N-terminus, the 156-residue chain is Small ribosomal subunit protein uS7 (156 aa).

This sequence belongs to the universal ribosomal protein uS7 family. Part of the 30S ribosomal subunit. Contacts proteins S9 and S11.

Its function is as follows. One of the primary rRNA binding proteins, it binds directly to 16S rRNA where it nucleates assembly of the head domain of the 30S subunit. Is located at the subunit interface close to the decoding center, probably blocks exit of the E-site tRNA. This is Small ribosomal subunit protein uS7 from Synechococcus sp. (strain CC9605).